The following is a 285-amino-acid chain: MAAKIIDGKTIARQVRSEVAARVRQRLADGKRAPGLAVIMVGDDPASRIYVGSKQRACEEVGFLSRSYALPDSTDEAQLLALIDTLNADAAIDGILVQLPLPAGIDNSRVLERIHPDKDVDGFHPYNLGRLCQRTPKLRPCTPRGIITLLERCGIETQGMDAVMVGASNIVGRPMALELLLAGCTTTITHSRTRNLQQHVERADLIVAAVGKPGFIPGEWVKPGAVVIDVGINRLESGKVVGDVDFTGAAQRASWITPVPGGVGPMTVATLMQNTLQACEAFHDD.

NADP(+)-binding positions include 166–168 (GAS), Ser-191, and Ile-232.

The protein belongs to the tetrahydrofolate dehydrogenase/cyclohydrolase family. Homodimer.

It carries out the reaction (6R)-5,10-methylene-5,6,7,8-tetrahydrofolate + NADP(+) = (6R)-5,10-methenyltetrahydrofolate + NADPH. The catalysed reaction is (6R)-5,10-methenyltetrahydrofolate + H2O = (6R)-10-formyltetrahydrofolate + H(+). Its pathway is one-carbon metabolism; tetrahydrofolate interconversion. Functionally, catalyzes the oxidation of 5,10-methylenetetrahydrofolate to 5,10-methenyltetrahydrofolate and then the hydrolysis of 5,10-methenyltetrahydrofolate to 10-formyltetrahydrofolate. The sequence is that of Bifunctional protein FolD from Edwardsiella ictaluri (strain 93-146).